We begin with the raw amino-acid sequence, 545 residues long: Cleavage and polyadenylation specificity factor subunit 6 (545 aa).

Residues 37-69 form a disordered region; that stretch reads ISPSANNGDAPEDRDYLDSLPAPGGNEGSKGAP. The 81-residue stretch at 81–161 folds into the RRM domain; that stretch reads IALYIGNLTW…QNPIVTPCNK (81 aa). Over residues 165-180 the composition is skewed to polar residues; it reads SQFEMQSRKSTQSGQM. Disordered regions lie at residues 165–404 and 478–545; these read SQFE…PLSE and YGSV…YRHR. Gly residues predominate over residues 184–200; the sequence is GKAGPPGSGSRGGGFPP. 4 stretches are compositionally biased toward pro residues: residues 220–230, 237–265, 287–363, and 372–383; these read PVGPGGPPPHF, PRLP…PLGG, PMGP…PPGN, and GPPPGDPYGRPP. Composition is skewed to basic and acidic residues over residues 384–397 and 483–497; these read PYDR…DMDA and GRRE…SRSR. Over residues 498–508 the composition is skewed to basic residues; sequence EKSRRHKSRSR. A compositionally biased stretch (basic and acidic residues) spans 509 to 545; the sequence is DRHEDYYRERSRERDRHRERDRDRERDREREREYRHR.

The protein belongs to the RRM CPSF6/7 family. As to quaternary structure, component of the cleavage factor Im (CFIm) complex.

It is found in the nucleus. The protein localises to the nucleoplasm. It localises to the nucleus speckle. The protein resides in the cytoplasm. Component of the cleavage factor Im (CFIm) complex that functions as an activator of the pre-mRNA 3'-end cleavage and polyadenylation processing required for the maturation of pre-mRNA into functional mRNAs. CFIm contributes to the recruitment of multiprotein complexes on specific sequences on the pre-mRNA 3'-end, so called cleavage and polyadenylation signals (pA signals). Most pre-mRNAs contain multiple pA signals, resulting in alternative cleavage and polyadenylation (APA) producing mRNAs with variable 3'-end formation. The CFIm complex acts as a key regulator of cleavage and polyadenylation site choice during APA through its binding to 5'-UGUA-3' elements localized in the 3'-untranslated region (UTR) for a huge number of pre-mRNAs. Plays a role in mRNA export. This Danio rerio (Zebrafish) protein is Cleavage and polyadenylation specificity factor subunit 6.